Reading from the N-terminus, the 211-residue chain is tRNA (guanine-N(7)-)-methyltransferase (211 aa).

E44, D69, D96, and D118 together coordinate S-adenosyl-L-methionine. D118 is a catalytic residue. K122 contributes to the substrate binding site. The interaction with RNA stretch occupies residues 124-129 (RHEKRR). Substrate-binding positions include D154 and 191–194 (TEYE).

The protein belongs to the class I-like SAM-binding methyltransferase superfamily. TrmB family.

The catalysed reaction is guanosine(46) in tRNA + S-adenosyl-L-methionine = N(7)-methylguanosine(46) in tRNA + S-adenosyl-L-homocysteine. The protein operates within tRNA modification; N(7)-methylguanine-tRNA biosynthesis. In terms of biological role, catalyzes the formation of N(7)-methylguanine at position 46 (m7G46) in tRNA. This is tRNA (guanine-N(7)-)-methyltransferase from Streptococcus pneumoniae (strain CGSP14).